A 96-amino-acid chain; its full sequence is Small ribosomal subunit protein bS6 (96 aa).

It belongs to the bacterial ribosomal protein bS6 family.

In terms of biological role, binds together with bS18 to 16S ribosomal RNA. The protein is Small ribosomal subunit protein bS6 of Bacillus thuringiensis subsp. konkukian (strain 97-27).